We begin with the raw amino-acid sequence, 110 residues long: Hydrogenase maturation factor HypA (110 aa).

His-2 lines the Ni(2+) pocket. Cys-70, Cys-73, Cys-86, and Cys-89 together coordinate Zn(2+).

Belongs to the HypA/HybF family.

Functionally, involved in the maturation of [NiFe] hydrogenases. Required for nickel insertion into the metal center of the hydrogenase. The protein is Hydrogenase maturation factor HypA of Geotalea daltonii (strain DSM 22248 / JCM 15807 / FRC-32) (Geobacter daltonii).